The following is a 231-amino-acid chain: Phosphatidylserine decarboxylase proenzyme (231 aa).

The active-site Schiff-base intermediate with substrate; via pyruvic acid is Ser-200. The residue at position 200 (Ser-200) is a Pyruvic acid (Ser); by autocatalysis.

Belongs to the phosphatidylserine decarboxylase family. PSD-A subfamily. In terms of assembly, heterodimer of a large membrane-associated beta subunit and a small pyruvoyl-containing alpha subunit. Requires pyruvate as cofactor. Is synthesized initially as an inactive proenzyme. Formation of the active enzyme involves a self-maturation process in which the active site pyruvoyl group is generated from an internal serine residue via an autocatalytic post-translational modification. Two non-identical subunits are generated from the proenzyme in this reaction, and the pyruvate is formed at the N-terminus of the alpha chain, which is derived from the carboxyl end of the proenzyme. The post-translation cleavage follows an unusual pathway, termed non-hydrolytic serinolysis, in which the side chain hydroxyl group of the serine supplies its oxygen atom to form the C-terminus of the beta chain, while the remainder of the serine residue undergoes an oxidative deamination to produce ammonia and the pyruvoyl prosthetic group on the alpha chain.

The protein localises to the cell membrane. The enzyme catalyses a 1,2-diacyl-sn-glycero-3-phospho-L-serine + H(+) = a 1,2-diacyl-sn-glycero-3-phosphoethanolamine + CO2. It participates in phospholipid metabolism; phosphatidylethanolamine biosynthesis; phosphatidylethanolamine from CDP-diacylglycerol: step 2/2. Catalyzes the formation of phosphatidylethanolamine (PtdEtn) from phosphatidylserine (PtdSer). The protein is Phosphatidylserine decarboxylase proenzyme of Mycobacterium tuberculosis (strain ATCC 25177 / H37Ra).